A 90-amino-acid polypeptide reads, in one-letter code: Movement protein (90 aa).

Residues 32–52 (FVFVTFGLLIAVGVAWLAYTL) form a helical membrane-spanning segment.

The protein belongs to the mastrevirus movement protein family. Interacts with the capsid protein (CP). Part of a MP-CP-viral DNA complex.

It localises to the host membrane. Involved in the viral transport within, and between cells. In Wheat dwarf virus (isolate Sweden) (WDV), this protein is Movement protein.